A 76-amino-acid chain; its full sequence is Large ribosomal subunit protein bL31 (76 aa).

Belongs to the bacterial ribosomal protein bL31 family. Type A subfamily. Part of the 50S ribosomal subunit.

Functionally, binds the 23S rRNA. The polypeptide is Large ribosomal subunit protein bL31 (Gluconacetobacter diazotrophicus (strain ATCC 49037 / DSM 5601 / CCUG 37298 / CIP 103539 / LMG 7603 / PAl5)).